The chain runs to 181 residues: Peptidyl-prolyl cis-trans isomerase H (181 aa).

The PPIase cyclophilin-type domain occupies 17-180 (FFDITLGGES…QDVTIIQCGE (164 aa)).

The protein belongs to the cyclophilin-type PPIase family. PPIase H subfamily.

The protein localises to the nucleus. The catalysed reaction is [protein]-peptidylproline (omega=180) = [protein]-peptidylproline (omega=0). Functionally, PPIases accelerate the folding of proteins. It catalyzes the cis-trans isomerization of proline imidic peptide bonds in oligopeptides. The chain is Peptidyl-prolyl cis-trans isomerase H (cyp3) from Aspergillus oryzae (strain ATCC 42149 / RIB 40) (Yellow koji mold).